Reading from the N-terminus, the 220-residue chain is Glycerol-3-phosphate acyltransferase (220 aa).

6 consecutive transmembrane segments (helical) span residues Ile11–Leu31, Leu70–Phe90, Leu96–Phe116, Gly127–Val147, Ile153–Pro173, and Pro192–Leu212.

It belongs to the PlsY family. In terms of assembly, probably interacts with PlsX.

The protein resides in the cell inner membrane. The catalysed reaction is an acyl phosphate + sn-glycerol 3-phosphate = a 1-acyl-sn-glycero-3-phosphate + phosphate. It participates in lipid metabolism; phospholipid metabolism. Its function is as follows. Catalyzes the transfer of an acyl group from acyl-phosphate (acyl-PO(4)) to glycerol-3-phosphate (G3P) to form lysophosphatidic acid (LPA). This enzyme utilizes acyl-phosphate as fatty acyl donor, but not acyl-CoA or acyl-ACP. The chain is Glycerol-3-phosphate acyltransferase from Helicobacter pylori (strain J99 / ATCC 700824) (Campylobacter pylori J99).